Reading from the N-terminus, the 1141-residue chain is DNA-directed RNA polymerase subunit beta (1141 aa).

This sequence belongs to the RNA polymerase beta chain family. The RNAP catalytic core consists of 2 alpha, 1 beta, 1 beta' and 1 omega subunit. When a sigma factor is associated with the core the holoenzyme is formed, which can initiate transcription.

It carries out the reaction RNA(n) + a ribonucleoside 5'-triphosphate = RNA(n+1) + diphosphate. DNA-dependent RNA polymerase catalyzes the transcription of DNA into RNA using the four ribonucleoside triphosphates as substrates. The polypeptide is DNA-directed RNA polymerase subunit beta (Frankia casuarinae (strain DSM 45818 / CECT 9043 / HFP020203 / CcI3)).